A 517-amino-acid chain; its full sequence is Phospholipase C C (517 aa).

Positions 1 to 39 form a signal peptide, tat-type signal; it reads MVSQGAFAGMSRRAFLAKAAGAGAAAVLTDWAAPVIEKA.

It belongs to the bacterial phospholipase C family. In terms of processing, predicted to be exported by the Tat system. The position of the signal peptide cleavage has not been experimentally proven.

Its subcellular location is the secreted. The protein resides in the cell wall. It catalyses the reaction a 1,2-diacyl-sn-glycero-3-phosphocholine + H2O = phosphocholine + a 1,2-diacyl-sn-glycerol + H(+). The enzyme catalyses 1,2-dihexadecanoyl-sn-glycero-3-phosphocholine + H2O = 1,2-dihexadecanoyl-sn-glycerol + phosphocholine + H(+). Involved in virulence. Induces cytotoxic effects on mouse macrophage cell lines, via direct or indirect enzymatic hydrolysis of cell membrane phospholipids. Hydrolyzes phosphatidylcholine. Does not have hemolytic activity. The chain is Phospholipase C C from Mycobacterium tuberculosis (strain ATCC 25618 / H37Rv).